The following is a 356-amino-acid chain: Alanine racemase, catabolic (356 aa).

K35 serves as the catalytic Proton acceptor; specific for D-alanine. K35 carries the post-translational modification N6-(pyridoxal phosphate)lysine. R130 lines the substrate pocket. The active-site Proton acceptor; specific for L-alanine is the Y253. M301 serves as a coordination point for substrate.

The protein belongs to the alanine racemase family. As to quaternary structure, monomer. Pyridoxal 5'-phosphate is required as a cofactor.

The enzyme catalyses L-alanine = D-alanine. Inactivated by D- and L-beta-fluoroalanine, D- and L-beta-chloroalanine, and O-acetyl-D-serine. Its function is as follows. Isomerizes L-alanine to D-alanine which is then oxidized to pyruvate by DadA. This Salmonella typhimurium (strain LT2 / SGSC1412 / ATCC 700720) protein is Alanine racemase, catabolic (dadX).